Reading from the N-terminus, the 162-residue chain is Putative 4-hydroxy-4-methyl-2-oxoglutarate aldolase (162 aa).

Residues 75-78 (GDML) and arginine 97 contribute to the substrate site. Residue aspartate 98 coordinates a divalent metal cation.

It belongs to the class II aldolase/RraA-like family. Homotrimer. A divalent metal cation is required as a cofactor.

The catalysed reaction is 4-hydroxy-4-methyl-2-oxoglutarate = 2 pyruvate. It catalyses the reaction oxaloacetate + H(+) = pyruvate + CO2. Its function is as follows. Catalyzes the aldol cleavage of 4-hydroxy-4-methyl-2-oxoglutarate (HMG) into 2 molecules of pyruvate. Also contains a secondary oxaloacetate (OAA) decarboxylase activity due to the common pyruvate enolate transition state formed following C-C bond cleavage in the retro-aldol and decarboxylation reactions. The polypeptide is Putative 4-hydroxy-4-methyl-2-oxoglutarate aldolase (Pseudomonas paraeruginosa (strain DSM 24068 / PA7) (Pseudomonas aeruginosa (strain PA7))).